Consider the following 655-residue polypeptide: Very long-chain specific acyl-CoA dehydrogenase, mitochondrial (655 aa).

The transit peptide at 1 to 40 (MQAARIAPSLGRQLLRFGGGSSRPTALLGQPWPGPARRPY) directs the protein to the mitochondrion. The segment at 41-482 (AGGAAQLALD…ALQGCMDKGK (442 aa)) is catalytic. N6-acetyllysine is present on Lys51. The residue at position 71 (Lys71) is an N6-acetyllysine; alternate. Residue Lys71 is modified to N6-succinyllysine; alternate. Residue Lys195 is modified to N6-succinyllysine. Residue 214–223 (FCLTEPSSGS) participates in FAD binding. Cys237 carries the S-nitrosocysteine modification. Lys239 is subject to N6-acetyllysine; alternate. Lys239 carries the N6-succinyllysine; alternate modification. 249-251 (WIS) contacts FAD. An N6-acetyllysine; alternate mark is found at Lys276 and Lys278. 2 positions are modified to N6-succinyllysine; alternate: Lys276 and Lys278. Lys298 carries the N6-acetyllysine modification. The residue at position 331 (Lys331) is an N6-acetyllysine; alternate. Lys331 carries the post-translational modification N6-succinyllysine; alternate. N6-succinyllysine is present on Lys372. 461-463 (FEG) is a substrate binding site. Glu462 functions as the Proton acceptor in the catalytic mechanism. Residue 464–466 (TND) coordinates FAD. Lys482 bears the N6-acetyllysine; alternate mark. Lys482 is subject to N6-succinyllysine; alternate. A membrane-anchoring region spans residues 483–516 (ELSGLGSALKNPFGNAGLLLGEAGKQLRRRAGLG). A phosphoserine mark is found at Ser517 and Ser522. Lys550 bears the N6-acetyllysine mark. At Lys556 the chain carries N6-acetyllysine; alternate. Lys556 bears the N6-succinyllysine; alternate mark. Gln562 is an FAD binding site. At Lys639 the chain carries N6-succinyllysine.

Belongs to the acyl-CoA dehydrogenase family. As to quaternary structure, homodimer. Homodimerizes after import into the mitochondrion. It depends on FAD as a cofactor. In terms of processing, S-nitrosylation at Cys-237 in liver improves catalytic efficiency.

It is found in the mitochondrion inner membrane. It catalyses the reaction a very-long-chain 2,3-saturated fatty acyl-CoA + oxidized [electron-transfer flavoprotein] + H(+) = a very-long-chain (2E)-enoyl-CoA + reduced [electron-transfer flavoprotein]. The enzyme catalyses dodecanoyl-CoA + oxidized [electron-transfer flavoprotein] + H(+) = (2E)-dodecenoyl-CoA + reduced [electron-transfer flavoprotein]. It carries out the reaction tetradecanoyl-CoA + oxidized [electron-transfer flavoprotein] + H(+) = (2E)-tetradecenoyl-CoA + reduced [electron-transfer flavoprotein]. The catalysed reaction is oxidized [electron-transfer flavoprotein] + hexadecanoyl-CoA + H(+) = (2E)-hexadecenoyl-CoA + reduced [electron-transfer flavoprotein]. It catalyses the reaction octadecanoyl-CoA + oxidized [electron-transfer flavoprotein] + H(+) = (2E)-octadecenoyl-CoA + reduced [electron-transfer flavoprotein]. The enzyme catalyses eicosanoyl-CoA + oxidized [electron-transfer flavoprotein] + H(+) = (2E)-eicosenoyl-CoA + reduced [electron-transfer flavoprotein]. It carries out the reaction docosanoyl-CoA + oxidized [electron-transfer flavoprotein] + H(+) = (2E)-docosenoyl-CoA + reduced [electron-transfer flavoprotein]. The catalysed reaction is tetracosanoyl-CoA + oxidized [electron-transfer flavoprotein] + H(+) = (2E)-tetracosenoyl-CoA + reduced [electron-transfer flavoprotein]. The protein operates within lipid metabolism; mitochondrial fatty acid beta-oxidation. Functionally, very long-chain specific acyl-CoA dehydrogenase is one of the acyl-CoA dehydrogenases that catalyze the first step of mitochondrial fatty acid beta-oxidation, an aerobic process breaking down fatty acids into acetyl-CoA and allowing the production of energy from fats. The first step of fatty acid beta-oxidation consists in the removal of one hydrogen from C-2 and C-3 of the straight-chain fatty acyl-CoA thioester, resulting in the formation of trans-2-enoyl-CoA. Among the different mitochondrial acyl-CoA dehydrogenases, very long-chain specific acyl-CoA dehydrogenase acts specifically on acyl-CoAs with saturated 12 to 24 carbons long primary chains. In Macaca fascicularis (Crab-eating macaque), this protein is Very long-chain specific acyl-CoA dehydrogenase, mitochondrial.